The following is a 269-amino-acid chain: Regulatory protein RecX (269 aa).

The protein belongs to the RecX family.

It is found in the cytoplasm. Modulates RecA activity. The polypeptide is Regulatory protein RecX (Geobacillus thermodenitrificans (strain NG80-2)).